The following is a 212-amino-acid chain: Tetraspanin-31-B (212 aa).

Residues 1–12 (MVCGGFTCSKNA) lie on the Cytoplasmic side of the membrane. A helical transmembrane segment spans residues 13–33 (LCALNVVYMLVGVLLIIVAAW). At 34 to 44 (GKGFGIVSSIH) the chain is on the extracellular side. The helical transmembrane segment at 45–65 (IIGGVIAIGVFLLLIAIIGLI) threads the bilayer. Topologically, residues 66–72 (GAVSHHQ) are cytoplasmic. A helical membrane pass occupies residues 73–93 (VMLFIYMVVLILVFIFQFIVS). At 94 to 175 (CSCLAMNRSQ…MLNHADEALK (82 aa)) the chain is on the extracellular side. Residues Asn100, Asn109, Asn117, and Asn134 are each glycosylated (N-linked (GlcNAc...) asparagine). The helical transmembrane segment at 176–196 (ILGGVGLFFSFTEILGVWLAF) threads the bilayer. At 197 to 212 (RYRNQKDPRANPSAFL) the chain is on the cytoplasmic side.

The protein belongs to the tetraspanin (TM4SF) family.

Its subcellular location is the membrane. This is Tetraspanin-31-B (tspan31-b) from Xenopus laevis (African clawed frog).